Consider the following 195-residue polypeptide: Fe/S biogenesis protein NfuA (195 aa).

[4Fe-4S] cluster contacts are provided by Cys152 and Cys155.

This sequence belongs to the NfuA family. In terms of assembly, homodimer. The cofactor is [4Fe-4S] cluster.

Functionally, involved in iron-sulfur cluster biogenesis. Binds a 4Fe-4S cluster, can transfer this cluster to apoproteins, and thereby intervenes in the maturation of Fe/S proteins. Could also act as a scaffold/chaperone for damaged Fe/S proteins. In Vibrio cholerae serotype O1 (strain ATCC 39315 / El Tor Inaba N16961), this protein is Fe/S biogenesis protein NfuA.